Consider the following 809-residue polypeptide: Glutamine--tRNA ligase (809 aa).

Residues 185–198 (DLIKKKTKNNEKKK) show a composition bias toward basic and acidic residues. The segment at 185–216 (DLIKKKTKNNEKKKTNSAKKSSDNSASSGPKR) is disordered. The 'HIGH' region signature appears at 258-268 (PEPNGYLHIGH). ATP is bound by residues 259 to 261 (EPN) and 265 to 271 (HIGHSKA). D291 contacts L-glutamine. S378 carries the phosphoserine modification. Position 440 (Y440) interacts with L-glutamine. ATP is bound by residues T459, 488 to 489 (RL), and 496 to 498 (LSK). Residues 495–499 (VLSKR) carry the 'KMSKS' region motif.

This sequence belongs to the class-I aminoacyl-tRNA synthetase family.

The enzyme catalyses tRNA(Gln) + L-glutamine + ATP = L-glutaminyl-tRNA(Gln) + AMP + diphosphate. The chain is Glutamine--tRNA ligase (GLN4) from Saccharomyces cerevisiae (strain ATCC 204508 / S288c) (Baker's yeast).